A 368-amino-acid polypeptide reads, in one-letter code: Homoserine O-acetyltransferase (368 aa).

Residues 43–354 (NVVVVCHALT…DYGHDAFLVE (312 aa)) form the AB hydrolase-1 domain. The active-site Nucleophile is the serine 148. Arginine 220 contributes to the substrate binding site. Catalysis depends on residues aspartate 314 and histidine 348. Aspartate 349 contributes to the substrate binding site.

The protein belongs to the AB hydrolase superfamily. MetX family. Homodimer.

The protein resides in the cytoplasm. The catalysed reaction is L-homoserine + acetyl-CoA = O-acetyl-L-homoserine + CoA. It participates in amino-acid biosynthesis; L-methionine biosynthesis via de novo pathway; O-acetyl-L-homoserine from L-homoserine: step 1/1. Its function is as follows. Transfers an acetyl group from acetyl-CoA to L-homoserine, forming acetyl-L-homoserine. This Sulfurimonas autotrophica (strain ATCC BAA-671 / DSM 16294 / JCM 11897 / OK10) protein is Homoserine O-acetyltransferase.